Here is a 393-residue protein sequence, read N- to C-terminus: GTP exchange factor for ARFs 1 (393 aa).

Residues 1 to 12 (MSSRYSERNGLS) show a composition bias toward polar residues. Positions 1–21 (MSSRYSERNGLSETEKMTLPK) are disordered. Positions 12-54 (SETEKMTLPKVRKRKAQLVDEIEALKNEVREVDEELDQVYYTH) form a coiled coil. In terms of domain architecture, SEC7 spans 53-239 (THPKSKEYHK…TEVYESVSVT (187 aa)). Residues 261-377 (HAEREGWLFK…MRSWINAISR (117 aa)) enclose the PH domain.

Functionally, promotes guanine-nucleotide exchange on ARF. Promotes the activation of ARF through replacement of GDP with GTP. Plays a role in cell shedding during embryogenesis, probably by promoting the endocytosis of cell adhesion molecules. The polypeptide is GTP exchange factor for ARFs 1 (grp-1) (Caenorhabditis elegans).